Consider the following 145-residue polypeptide: Deoxyuridine 5'-triphosphate nucleotidohydrolase (145 aa).

Substrate-binding positions include 62 to 64 (RSG), N75, 79 to 81 (TVD), and K89.

This sequence belongs to the dUTPase family. It depends on Mg(2+) as a cofactor.

The catalysed reaction is dUTP + H2O = dUMP + diphosphate + H(+). It participates in pyrimidine metabolism; dUMP biosynthesis; dUMP from dCTP (dUTP route): step 2/2. Functionally, this enzyme is involved in nucleotide metabolism: it produces dUMP, the immediate precursor of thymidine nucleotides and it decreases the intracellular concentration of dUTP so that uracil cannot be incorporated into DNA. In Helicobacter pylori (strain J99 / ATCC 700824) (Campylobacter pylori J99), this protein is Deoxyuridine 5'-triphosphate nucleotidohydrolase.